We begin with the raw amino-acid sequence, 372 residues long: Alpha-parvin (372 aa).

The disordered stretch occupies residues 1–31; sequence MATSPQKSPLVPKSPTPKSPPSRKKDDSFLG. Alanine 2 carries the post-translational modification N-acetylalanine. Serine 8, serine 14, and serine 19 each carry phosphoserine. The interaction with ARHGAP31 stretch occupies residues 21–25; the sequence is PSRKK. Phosphoserine is present on residues serine 28 and serine 62. 2 Calponin-homology (CH) domains span residues 95–202 and 262–369; these read QELM…QYFR and NVVK…TKYR. The tract at residues 223–372 is required for interaction with TESK1 and ILK; that stretch reads GILQSRQIQE…NLFTKYRNVE (150 aa).

The protein belongs to the parvin family. Component of the heterotrimeric IPP (ILK-PINCH-PARVIN) complex composed of ILK, LIMS1/PINCH and PARVA; the complex binds to F-actin via the C-terminal tail of LIMS1 and the N-terminal region of PARVA, promoting F-actin filament bundling. Interacts with TGFB1I1. Interacts with ARHGAP31. Interacts with the actin cytoskeleton. Interacts (via C-terminus) with TESK1 (via C-terminus); the interaction inhibits TESK1 kinase activity. Interacts with PXN/PAXILLIN (via LD motif 4).

The protein resides in the cell junction. Its subcellular location is the focal adhesion. It is found in the cell membrane. It localises to the cytoplasm. The protein localises to the cytoskeleton. The protein resides in the myofibril. Its subcellular location is the sarcomere. It is found in the z line. Functionally, plays a role in sarcomere organization and in smooth muscle cell contraction. Required for normal development of the embryonic cardiovascular system, and for normal septation of the heart outflow tract. Plays a role in sprouting angiogenesis and is required for normal adhesion of vascular smooth muscle cells to endothelial cells during blood vessel development. Plays a role in the reorganization of the actin cytoskeleton, formation of lamellipodia and ciliogenesis. Plays a role in the establishment of cell polarity, cell adhesion, cell spreading, and directed cell migration. Within the IPP (ILK-PINCH-PARVIN) complex, binds to F-actin, promoting F-actin bundling, a process required to generate force for actin cytoskeleton reorganization and subsequent dynamic cell adhesion events such as cell spreading and migration. The protein is Alpha-parvin (Parva) of Mus musculus (Mouse).